The following is a 257-amino-acid chain: 3-deoxy-manno-octulosonate cytidylyltransferase (257 aa).

It belongs to the KdsB family.

It is found in the cytoplasm. It catalyses the reaction 3-deoxy-alpha-D-manno-oct-2-ulosonate + CTP = CMP-3-deoxy-beta-D-manno-octulosonate + diphosphate. It participates in nucleotide-sugar biosynthesis; CMP-3-deoxy-D-manno-octulosonate biosynthesis; CMP-3-deoxy-D-manno-octulosonate from 3-deoxy-D-manno-octulosonate and CTP: step 1/1. It functions in the pathway bacterial outer membrane biogenesis; lipopolysaccharide biosynthesis. In terms of biological role, activates KDO (a required 8-carbon sugar) for incorporation into bacterial lipopolysaccharide in Gram-negative bacteria. The sequence is that of 3-deoxy-manno-octulosonate cytidylyltransferase from Xylella fastidiosa (strain M12).